A 759-amino-acid polypeptide reads, in one-letter code: Olfactomedin-like protein 2B (759 aa).

The signal sequence occupies residues M1–G20. Coiled coils occupy residues T40 to A68 and K179 to R209. Residues N187 and N213 are each glycosylated (N-linked (GlcNAc...) asparagine). 2 disordered regions span residues T346–S396 and T456–D494. Low complexity predominate over residues A356–S396. The region spanning R502 to Y759 is the Olfactomedin-like domain. A disulfide bond links C503 and C689. The N-linked (GlcNAc...) asparagine glycan is linked to N704.

As to quaternary structure, homodimer. Binds to heparin and chondroitin sulfate E. O-glycosylated and N-glycosylated.

The protein localises to the secreted. This chain is Olfactomedin-like protein 2B (OLFML2B), found in Bos taurus (Bovine).